The primary structure comprises 843 residues: Histone-lysine N-methyltransferase PRDM9 (843 aa).

The 64-residue stretch at 23–86 folds into the KRAB-related domain; that stretch reads KVKDEFKDIS…QRQAMKPQIN (64 aa). Disordered regions lie at residues 85–104 and 110–170; these read INDS…VSPP and VKHS…KKLK. Zn(2+) contacts are provided by C205, C208, C216, and H219. Positions 244–358 constitute an SET domain; it reads PGLRISPSGI…PGCELLVWYG (115 aa). Residues 256–258, Y291, and 320–321 each bind S-adenosyl-L-methionine; these read AGL and NC. 288–294 is a binding site for substrate; sequence NSGYSWL. Residue Y357 participates in substrate binding. N6,N6,N6-trimethyllysine; alternate is present on K368. K368 is subject to N6-methyllysine; alternate. An N6-methyllysine mark is found at K372 and K374. A C2H2-type 1 zinc finger spans residues 388–411; the sequence is HPCLLCSLAFSSQKFLTQHMEWNH. Zn(2+) is bound by residues C390, C393, H406, and H411. Residues 418 to 493 are disordered; the sequence is GTSARINPKP…VEELRTGQTT (76 aa). A compositionally biased stretch (basic and acidic residues) spans 436-454; sequence QEQHVDSQNKNDKASNEVK. Over residues 462-472 the composition is skewed to polar residues; that stretch reads RISTTFPSTLK. Basic and acidic residues predominate over residues 473–488; that stretch reads EQMRSEESKRTVEELR. Residues 513–531 form a C2H2-type 2; degenerate zinc finger; that stretch reads QCGQYFSDKSNVNEHQKTH. C2H2-type zinc fingers lie at residues 537 to 559, 565 to 587, 593 to 615, 621 to 643, 649 to 671, 677 to 699, 705 to 727, 733 to 755, 761 to 783, 789 to 811, and 817 to 839; these read YVCR…QRTH. Positions 707, 710, 723, 727, 735, 738, 751, 755, 763, 766, 779, 783, 791, 794, 807, and 811 each coordinate Zn(2+). The segment at 715–805 is DNA-binding; the sequence is TAKSNLIQHQ…RGFTQKSNLI (91 aa).

It belongs to the class V-like SAM-binding methyltransferase superfamily. As to quaternary structure, homodimer. Interacts with EHMT2 and CDYL; interaction only takes place when PRDM9 is bound to hotspot DNA. Interacts with CXXC1; this interaction does not link PRDM9-activated recombination hotspot sites with DSB machinery and is not required for the hotspot recognition pathway. Forms a complex with EWSR1, REC8, SYCP3 and SYCP1; complex formation is dependent of phosphorylated form of REC8 and requires PRDM9 bound to hotspot DNA; EWSR1 joins PRDM9 with the chromosomal axis through REC8. In terms of processing, mono-methylated; automethylated. Tri-methylated; automethylated. Mono-methylation is predominant; automethylation is lower and slower than H3 peptide methylation and is in a highest S-adenosyl-L-methionine concentration-dependent. There are two major sites for automethylation at Lys-368 and Lys-374. Lysines can be simultaneously methylated, such as Lys-368(me3)/Lys-372(me1), Lys-368(me1)/Lys-374(me1) and Lys-368(me1)/Lys-372(me1)/Lys-374(me1). Automethylation is an intramolecular (cis) process. As to expression, specifically expressed in germ cells entering meiotic prophase in female fetal gonads and in postnatal testis. Expressed in early meiotic prophase.

The protein localises to the nucleus. It localises to the chromosome. It carries out the reaction L-lysyl-[protein] + S-adenosyl-L-methionine = N(6)-methyl-L-lysyl-[protein] + S-adenosyl-L-homocysteine + H(+). The enzyme catalyses N(6),N(6)-dimethyl-L-lysyl-[protein] + S-adenosyl-L-methionine = N(6),N(6),N(6)-trimethyl-L-lysyl-[protein] + S-adenosyl-L-homocysteine + H(+). The catalysed reaction is L-lysyl(4)-[histone H3] + 3 S-adenosyl-L-methionine = N(6),N(6),N(6)-trimethyl-L-lysyl(4)-[histone H3] + 3 S-adenosyl-L-homocysteine + 3 H(+). It catalyses the reaction L-lysyl(36)-[histone H3] + 3 S-adenosyl-L-methionine = N(6),N(6),N(6)-trimethyl-L-lysyl(36)-[histone H3] + 3 S-adenosyl-L-homocysteine + 3 H(+). It carries out the reaction L-lysyl(9)-[histone H3] + 3 S-adenosyl-L-methionine = N(6),N(6),N(6)-trimethyl-L-lysyl(9)-[histone H3] + 3 S-adenosyl-L-homocysteine + 3 H(+). The enzyme catalyses L-lysyl(20)-[histone H4] + S-adenosyl-L-methionine = N(6)-methyl-L-lysyl(20)-[histone H4] + S-adenosyl-L-homocysteine + H(+). The catalysed reaction is N(6)-methyl-L-lysyl(20)-[histone H4] + S-adenosyl-L-methionine = N(6),N(6)-dimethyl-L-lysyl(20)-[histone H4] + S-adenosyl-L-homocysteine + H(+). In terms of biological role, histone methyltransferase that sequentially mono-, di-, and tri-methylates both 'Lys-4' (H3K4) and 'Lys-36' (H3K36) of histone H3 to produce respectively trimethylated 'Lys-4' (H3K4me3) and trimethylated 'Lys-36' (H3K36me3) histone H3 and plays a key role in meiotic prophase by determining hotspot localization thereby promoting meiotic recombination. Can also methylate all four core histones with H3 being the best substrate and the most highly modified. Is also able, on one hand, to mono and di-methylate H4K20 and on other hand to trimethylate H3K9 with the di-methylated H3K9 as the best substrate. During meiotic prophase, binds specific DNA sequences through its zinc finger domains thereby determining hotspot localization where it promotes local H3K4me3 and H3K36me3 enrichment on the same nucleosomes through its histone methyltransferase activity. Thereby promotes double-stranded breaks (DSB) formation, at this subset of PRDM9-binding sites, that initiates meiotic recombination for the proper meiotic progression. During meiotic progression hotspot-bound PRDM9 interacts with several complexes; in early leptonema binds CDYL and EHMT2 followed by EWSR1 and CXXC1 by the end of leptonema. EWSR1 joins PRDM9 with the chromosomal axis through REC8. In this way, controls the DSB repair pathway, pairing of homologous chromosomes and sex body formation. Moreover plays a central role in the transcriptional activation of genes during early meiotic prophase thanks to H3K4me3 and H3K36me3 enrichment that represents a specific tag for epigenetic transcriptional activation. In addition performs automethylation. Acetylation and phosphorylation of histone H3 attenuate or prevent histone H3 methylation. This Mus musculus (Mouse) protein is Histone-lysine N-methyltransferase PRDM9.